The primary structure comprises 417 residues: Gamma-glutamyl phosphate reductase (417 aa).

Belongs to the gamma-glutamyl phosphate reductase family.

Its subcellular location is the cytoplasm. The catalysed reaction is L-glutamate 5-semialdehyde + phosphate + NADP(+) = L-glutamyl 5-phosphate + NADPH + H(+). Its pathway is amino-acid biosynthesis; L-proline biosynthesis; L-glutamate 5-semialdehyde from L-glutamate: step 2/2. Its function is as follows. Catalyzes the NADPH-dependent reduction of L-glutamate 5-phosphate into L-glutamate 5-semialdehyde and phosphate. The product spontaneously undergoes cyclization to form 1-pyrroline-5-carboxylate. The sequence is that of Gamma-glutamyl phosphate reductase from Legionella pneumophila (strain Corby).